Reading from the N-terminus, the 113-residue chain is Large ribosomal subunit protein uL22 (113 aa).

It belongs to the universal ribosomal protein uL22 family. As to quaternary structure, part of the 50S ribosomal subunit.

Functionally, this protein binds specifically to 23S rRNA; its binding is stimulated by other ribosomal proteins, e.g. L4, L17, and L20. It is important during the early stages of 50S assembly. It makes multiple contacts with different domains of the 23S rRNA in the assembled 50S subunit and ribosome. Its function is as follows. The globular domain of the protein is located near the polypeptide exit tunnel on the outside of the subunit, while an extended beta-hairpin is found that lines the wall of the exit tunnel in the center of the 70S ribosome. The sequence is that of Large ribosomal subunit protein uL22 from Symbiobacterium thermophilum (strain DSM 24528 / JCM 14929 / IAM 14863 / T).